Consider the following 497-residue polypeptide: Signal recognition particle subunit SRP54 2 (497 aa).

The G-domain stretch occupies residues 1–297 (MVLAELGGRI…DAKPFVSRLL (297 aa)). Residues 108–117 (GLQGEVLEKP), 192–196 (DTSGR), and 250–253 (TKMD) each bind GTP. The segment at 298 to 497 (GNGDMSGFVN…LMGMFGGRDE (200 aa)) is M-domain.

The protein belongs to the GTP-binding SRP family. SRP54 subfamily. In terms of assembly, component of a signal recognition particle (SRP) complex that consists of a 7SL RNA molecule of 300 nucleotides and six protein subunits: SRP72, SRP68, SRP54, SRP19, SRP14 and SRP9.

It localises to the cytoplasm. The protein resides in the endoplasmic reticulum. It carries out the reaction GTP + H2O = GDP + phosphate + H(+). Component of the signal recognition particle (SRP) complex, a ribonucleoprotein complex that mediates the cotranslational targeting of secretory and membrane proteins to the endoplasmic reticulum (ER). As part of the SRP complex, associates with the SRP receptor (SR) component SRPRA to target secretory proteins to the endoplasmic reticulum membrane. Binds to the signal sequence of presecretory proteins when they emerge from the ribosomes. Displays basal GTPase activity, and stimulates reciprocal GTPase activation of the SR subunit SRPRA. Forms a guanosine 5'-triphosphate (GTP)-dependent complex with the SR subunit SRPRA. SR compaction and GTPase mediated rearrangement of SR drive SRP-mediated cotranslational protein translocation into the ER. Requires the presence of SRP9/SRP14 and/or SRP19 to stably interact with RNA. The protein is Signal recognition particle subunit SRP54 2 (SRP-54B) of Arabidopsis thaliana (Mouse-ear cress).